We begin with the raw amino-acid sequence, 209 residues long: NAD(P)H-quinone oxidoreductase subunit K 2 (209 aa).

[4Fe-4S] cluster-binding residues include Cys-53, Cys-54, Cys-118, and Cys-149.

The protein belongs to the complex I 20 kDa subunit family. As to quaternary structure, NDH-1 can be composed of about 15 different subunits; different subcomplexes with different compositions have been identified which probably have different functions. [4Fe-4S] cluster serves as cofactor.

It is found in the cellular thylakoid membrane. It catalyses the reaction a plastoquinone + NADH + (n+1) H(+)(in) = a plastoquinol + NAD(+) + n H(+)(out). The catalysed reaction is a plastoquinone + NADPH + (n+1) H(+)(in) = a plastoquinol + NADP(+) + n H(+)(out). Its function is as follows. NDH-1 shuttles electrons from an unknown electron donor, via FMN and iron-sulfur (Fe-S) centers, to quinones in the respiratory and/or the photosynthetic chain. The immediate electron acceptor for the enzyme in this species is believed to be plastoquinone. Couples the redox reaction to proton translocation, and thus conserves the redox energy in a proton gradient. Cyanobacterial NDH-1 also plays a role in inorganic carbon-concentration. The chain is NAD(P)H-quinone oxidoreductase subunit K 2 from Acaryochloris marina (strain MBIC 11017).